The following is a 152-amino-acid chain: Superoxide dismutase [Cu-Zn] 1 (152 aa).

Cu cation-binding residues include His45, His47, and His62. The cysteines at positions 56 and 145 are disulfide-linked. Residues His62, His70, His79, and Asp82 each contribute to the Zn(2+) site. His119 serves as a coordination point for Cu cation.

It belongs to the Cu-Zn superoxide dismutase family. Homodimer. Cu cation is required as a cofactor. Zn(2+) serves as cofactor.

It localises to the cytoplasm. The catalysed reaction is 2 superoxide + 2 H(+) = H2O2 + O2. Its function is as follows. Destroys radicals which are normally produced within the cells and which are toxic to biological systems. This is Superoxide dismutase [Cu-Zn] 1 (SODCC.1) from Solanum lycopersicum (Tomato).